Consider the following 258-residue polypeptide: Snake venom serine proteinase 8 (258 aa).

The N-terminal stretch at 1 to 18 (MVLIRVLANLLILQLSYA) is a signal peptide. The propeptide occupies 19–24 (QKSSEL). The Peptidase S1 domain maps to 25-249 (VIGGDECNIN…YNDWIQSIIA (225 aa)). Cystine bridges form between Cys31–Cys163, Cys50–Cys66, Cys98–Cys256, Cys142–Cys210, Cys174–Cys189, and Cys200–Cys225. A glycan (N-linked (GlcNAc...) asparagine) is linked at Asn44. Residues His65 and Asp110 each act as charge relay system in the active site. The Charge relay system role is filled by Ser204.

Belongs to the peptidase S1 family. Snake venom subfamily. In terms of assembly, monomer. Expressed by the venom gland.

The protein resides in the secreted. Functionally, snake venom serine protease that may act in the hemostasis system of the prey. The sequence is that of Snake venom serine proteinase 8 from Crotalus adamanteus (Eastern diamondback rattlesnake).